Consider the following 419-residue polypeptide: MSYDQIEVPDDGEKITVDEETGELSVPDNPIIPIIHGDGIGTDVGPAAQKVLDAAAEATGRSVSWMRVYAGSSARDKYDENLPEDTVSAIRNHRVAIKGPLTTPVGAGFRSLNVALRKKLDLYANVRPTYHLDGVPSPVKNPSAMDMVTFRENTEDVYAGIEWEAGTDEVQKVKEFVEEEMGADGVIHDGPVGIGIKPITEFGTKRLVREAIEYALENDRPSVTLVHKGNIMKFTEGAFRDWGYELAEEEFGDVTITEDELWEEYDGERPEDKVVVKDRIADNMLQQLLTRTADYDVIATMNLNGDYMSDAAGAQIGGLGIAPGANFGEGLCLAEPVHGSAPKYAGEDKVNPTAMILSGRLMFEYMGWKDAGKLIRDAVEKTISDGDVTYDLERQIEGGNKLATSEYADKVVENIKELA.

Thr-102 contacts NADP(+). D-threo-isocitrate contacts are provided by Ser-111, Asn-113, Arg-117, Arg-127, and Arg-151. Asp-306 serves as a coordination point for Mg(2+). Residues His-338–Tyr-344, Asn-351, Tyr-390, and Arg-394 each bind NADP(+).

It belongs to the isocitrate and isopropylmalate dehydrogenases family. In terms of assembly, homodimer. It depends on Mg(2+) as a cofactor. Mn(2+) serves as cofactor.

It carries out the reaction D-threo-isocitrate + NADP(+) = 2-oxoglutarate + CO2 + NADPH. Functionally, catalyzes the oxidative decarboxylation of isocitrate to 2-oxoglutarate and carbon dioxide with the concomitant reduction of NADP(+). This Haloferax volcanii (strain ATCC 29605 / DSM 3757 / JCM 8879 / NBRC 14742 / NCIMB 2012 / VKM B-1768 / DS2) (Halobacterium volcanii) protein is Isocitrate dehydrogenase [NADP].